Reading from the N-terminus, the 323-residue chain is MDLTSWAIFPLLLASIGVYGLYKLLQKLRSGAYLQAAVVVITGATSGLGKECAKVFYAAGSHLVLCGRDEERLKDLVQELNNMRLKSTQLHKPHMVIFDLSDVEAVNTAAKEILHLAGRVDILINNAGISYRGTILDTKVSVDRMVMDTNYFGPVALTKALLPSMIKNRRGHVVVISSVQGKISIPFRSAYSASKHATQAFFDCLRAEMSPYDIDVTVVNPGYIKTNLSLNAVTGDGSGYGVMDKNTADGRTPEEVAQTVLRAVGERRKELLVAGLVPTLAVYLRTLAPTLFFSIMSARAKKRTKAKGFITNSNLKAKITVCI.

Residues 1 to 4 (MDLT) are Cytoplasmic-facing. Residues 5-25 (SWAIFPLLLASIGVYGLYKLL) traverse the membrane as a helical; Signal-anchor for type II membrane protein segment. The Lumenal segment spans residues 26 to 272 (QKLRSGAYLQ…AVGERRKELL (247 aa)). Serine 46 and leucine 48 together coordinate NAD(+). Position 178 (serine 178) interacts with substrate. 3 residues coordinate NAD(+): tyrosine 191, lysine 195, and threonine 226. The Proton acceptor role is filled by tyrosine 191.

This sequence belongs to the short-chain dehydrogenases/reductases (SDR) family.

The protein resides in the endoplasmic reticulum membrane. Functionally, putative oxidoreductase. This chain is Dehydrogenase/reductase SDR family member 7B (dhrs7b), found in Xenopus laevis (African clawed frog).